Reading from the N-terminus, the 1571-residue chain is Disco-interacting protein 2 homolog A (1571 aa).

A DMAP1-binding domain is found at 9-127 (EAAPLPAEVR…KRRSVLVHSS (119 aa)). The disordered stretch occupies residues 60–203 (LQAENRIPGP…APSAAATPGA (144 aa)). Positions 86 to 98 (ASRDERFRSDVHT) are enriched in basic and acidic residues. The residue at position 94 (Ser-94) is a Phosphoserine. Polar residues-rich tracts occupy residues 127–139 (SVET…TSSA) and 152–162 (LTSTPLQSHSS). 2 positions are modified to phosphothreonine: Thr-132 and Thr-155. The span at 174-203 (SSTSSSASSTSSHPGGRPTTAPSAAATPGA) shows a compositional bias: low complexity. 2 consecutive short sequence motifs (PXXP motif; required for interaction with CTTN) follow at residues 283-286 (PKRP) and 307-310 (PNQP). A disordered region spans residues 302–327 (VQQPDPNQPKPEGSETSVLRGEPLTA).

The protein belongs to the DIP2 family. As to quaternary structure, interacts with FSTL1; DIP2A may act as a cell surface receptor for FSTL1. Interacts (via N-terminus) with CTTN (via SH3 domain); the interaction promotes acetylation of CTTN and is required for proper synaptic transmission. Interacts with SHANK3. Low expression in all tissues tested.

It localises to the cell membrane. The protein localises to the mitochondrion. Its subcellular location is the cell projection. It is found in the dendritic spine. It catalyses the reaction acetate + ATP + CoA = acetyl-CoA + AMP + diphosphate. Catalyzes the de novo synthesis of acetyl-CoA in vitro. Promotes acetylation of CTTN, possibly by providing the acetyl donor, ensuring correct dendritic spine morphology and synaptic transmission. Binds to follistatin-related protein FSTL1 and may act as a cell surface receptor for FSTL1, contributing to AKT activation and subsequent FSTL1-induced survival and function of endothelial cells and cardiac myocytes. In Homo sapiens (Human), this protein is Disco-interacting protein 2 homolog A (DIP2A).